We begin with the raw amino-acid sequence, 276 residues long: Large ribosomal subunit protein uL2 (276 aa).

Disordered stretches follow at residues 14–58 (RNAS…GGGH) and 219–276 (PITR…KNRK). Residues 16 to 27 (ASVSDFSELTRS) are compositionally biased toward polar residues. Residues 255–276 (RRPKKASNKMIVRRRPSGKNRK) show a composition bias toward basic residues.

This sequence belongs to the universal ribosomal protein uL2 family. In terms of assembly, part of the 50S ribosomal subunit. Forms a bridge to the 30S subunit in the 70S ribosome.

In terms of biological role, one of the primary rRNA binding proteins. Required for association of the 30S and 50S subunits to form the 70S ribosome, for tRNA binding and peptide bond formation. It has been suggested to have peptidyltransferase activity; this is somewhat controversial. Makes several contacts with the 16S rRNA in the 70S ribosome. This is Large ribosomal subunit protein uL2 from Bifidobacterium longum (strain DJO10A).